The primary structure comprises 405 residues: Argininosuccinate synthase (405 aa).

ATP is bound by residues 10 to 18 (AYSGGLDTS) and A37. L-citrulline-binding residues include Y88 and S93. G118 provides a ligand contact to ATP. T120, N124, and D125 together coordinate L-aspartate. L-citrulline is bound at residue N124. The L-citrulline site is built by R128, S179, S188, E264, and Y276.

Belongs to the argininosuccinate synthase family. Type 1 subfamily. Homotetramer.

Its subcellular location is the cytoplasm. The enzyme catalyses L-citrulline + L-aspartate + ATP = 2-(N(omega)-L-arginino)succinate + AMP + diphosphate + H(+). Its pathway is amino-acid biosynthesis; L-arginine biosynthesis; L-arginine from L-ornithine and carbamoyl phosphate: step 2/3. The polypeptide is Argininosuccinate synthase (Stutzerimonas stutzeri (strain A1501) (Pseudomonas stutzeri)).